Reading from the N-terminus, the 32-residue chain is Defensin-3 (32 aa).

Disulfide bonds link C3-C31, C5-C20, and C10-C30.

The protein resides in the secreted. Its function is as follows. Has antibacterial activity against the Gram-negative bacterium E.coli and the Gram-positive bacteria L.monocytogenes and S.aureus. Has antifungal activity against C.albicans. This Papio hamadryas (Hamadryas baboon) protein is Defensin-3.